The primary structure comprises 348 residues: Dihydroorotase (348 aa).

2 residues coordinate Zn(2+): His-17 and His-19. Residues 19-21 (HLR) and Asn-45 contribute to the substrate site. Residues Lys-103, His-140, and His-178 each coordinate Zn(2+). Lys-103 is subject to N6-carboxylysine. His-140 contributes to the substrate binding site. Leu-223 provides a ligand contact to substrate. Asp-251 contacts Zn(2+). Asp-251 is a catalytic residue. Substrate is bound by residues His-255 and Ala-267.

It belongs to the metallo-dependent hydrolases superfamily. DHOase family. Class II DHOase subfamily. As to quaternary structure, homodimer. Zn(2+) is required as a cofactor.

It carries out the reaction (S)-dihydroorotate + H2O = N-carbamoyl-L-aspartate + H(+). It participates in pyrimidine metabolism; UMP biosynthesis via de novo pathway; (S)-dihydroorotate from bicarbonate: step 3/3. Catalyzes the reversible cyclization of carbamoyl aspartate to dihydroorotate. The protein is Dihydroorotase of Escherichia coli O139:H28 (strain E24377A / ETEC).